The sequence spans 368 residues: MATHNIVVFGGDHCGPEVVVEAIKVLKSIETNSPSAGKFNLQNHLLGGASIDKHHDPLTDEALNAAKAADAVLLGAIGGPEWGTSSTVRPEQGLLKLRKELGTYGNLRPCNFASESLVDSSPLKAEVCRGTDFIVVRELTGGIYFGDRTEDDGSGYACDTEPYSRAEIERIARLAGFLALAKNPPAKVWSLDKANVLATSRLWRKTVTDVISKEFPQLQLEHQLIDSAAMLLVKNPRALNGVVITSNLFGDIISDEASVIPGSIGLLPSASLGGIPDGKGKCNGIYEPIHGSAPDISGKGIVNPVGTILSVAMMLRYSLNLPKEADAVEAAVKAAIDNGTKTKDLGGSATTSDMGNAVVAELEKILKA.

79–91 (GPEWGTSSTVRPE) contacts NAD(+). The substrate site is built by arginine 98, arginine 108, arginine 137, and aspartate 226. Aspartate 226, aspartate 251, and aspartate 255 together coordinate Mg(2+). 291–303 (GSAPDISGKGIVN) is a binding site for NAD(+).

It belongs to the isocitrate and isopropylmalate dehydrogenases family. Homodimer. Requires Mg(2+) as cofactor. Mn(2+) is required as a cofactor.

The protein localises to the cytoplasm. It catalyses the reaction (2R,3S)-3-isopropylmalate + NAD(+) = 4-methyl-2-oxopentanoate + CO2 + NADH. It participates in amino-acid biosynthesis; L-leucine biosynthesis; L-leucine from 3-methyl-2-oxobutanoate: step 3/4. In terms of biological role, catalyzes the oxidation of 3-carboxy-2-hydroxy-4-methylpentanoate (3-isopropylmalate) to 3-carboxy-4-methyl-2-oxopentanoate. The product decarboxylates to 4-methyl-2 oxopentanoate. This Sordaria macrospora protein is 3-isopropylmalate dehydrogenase (LEU1).